The chain runs to 521 residues: Ribonuclease Y (521 aa).

Residues 5–25 traverse the membrane as a helical segment; that stretch reads LLLILTAVIMLIVGFAVGAIL. The tract at residues 77–107 is disordered; it reads ELKDRRGEVQKQENRLIQREETMDRKDATLD. The region spanning 211-271 is the KH domain; that stretch reads TVTVVTLPND…IRREIARMTL (61 aa). One can recognise an HD domain in the interval 337–430; it reads VLNHSIEVAK…VAASDAISAA (94 aa).

Belongs to the RNase Y family.

It is found in the cell membrane. Endoribonuclease that initiates mRNA decay. In Latilactobacillus sakei subsp. sakei (strain 23K) (Lactobacillus sakei subsp. sakei), this protein is Ribonuclease Y.